A 185-amino-acid chain; its full sequence is Potassium-transporting ATPase KdpC subunit (185 aa).

The chain crosses the membrane as a helical span at residues Leu11 to Ala31.

It belongs to the KdpC family. The system is composed of three essential subunits: KdpA, KdpB and KdpC.

Its subcellular location is the cell inner membrane. Part of the high-affinity ATP-driven potassium transport (or Kdp) system, which catalyzes the hydrolysis of ATP coupled with the electrogenic transport of potassium into the cytoplasm. This subunit acts as a catalytic chaperone that increases the ATP-binding affinity of the ATP-hydrolyzing subunit KdpB by the formation of a transient KdpB/KdpC/ATP ternary complex. This is Potassium-transporting ATPase KdpC subunit from Pseudomonas putida (strain ATCC 47054 / DSM 6125 / CFBP 8728 / NCIMB 11950 / KT2440).